The sequence spans 210 residues: ATP-dependent Clp protease proteolytic subunit (210 aa).

Catalysis depends on S114, which acts as the Nucleophile. H139 is a catalytic residue.

This sequence belongs to the peptidase S14 family. Fourteen ClpP subunits assemble into 2 heptameric rings which stack back to back to give a disk-like structure with a central cavity, resembling the structure of eukaryotic proteasomes.

Its subcellular location is the cytoplasm. The catalysed reaction is Hydrolysis of proteins to small peptides in the presence of ATP and magnesium. alpha-casein is the usual test substrate. In the absence of ATP, only oligopeptides shorter than five residues are hydrolyzed (such as succinyl-Leu-Tyr-|-NHMec, and Leu-Tyr-Leu-|-Tyr-Trp, in which cleavage of the -Tyr-|-Leu- and -Tyr-|-Trp bonds also occurs).. Functionally, cleaves peptides in various proteins in a process that requires ATP hydrolysis. Has a chymotrypsin-like activity. Plays a major role in the degradation of misfolded proteins. The protein is ATP-dependent Clp protease proteolytic subunit of Janthinobacterium sp. (strain Marseille) (Minibacterium massiliensis).